Consider the following 155-residue polypeptide: Large ribosomal subunit protein uL22c (155 aa).

This sequence belongs to the universal ribosomal protein uL22 family. As to quaternary structure, part of the 50S ribosomal subunit.

The protein resides in the plastid. It is found in the chloroplast. Its function is as follows. This protein binds specifically to 23S rRNA. In terms of biological role, the globular domain of the protein is located near the polypeptide exit tunnel on the outside of the subunit, while an extended beta-hairpin is found that lines the wall of the exit tunnel in the center of the 70S ribosome. The protein is Large ribosomal subunit protein uL22c (rpl22) of Coffea arabica (Arabian coffee).